The chain runs to 454 residues: Bifunctional protein GlmU (454 aa).

Residues 1-226 are pyrophosphorylase; the sequence is MLAVAVLAAG…PDEVNGINNR (226 aa). Residues 7-10, K21, Q73, and 78-79 each bind UDP-N-acetyl-alpha-D-glucosamine; these read LAAG and GT. Residue D103 coordinates Mg(2+). Residues G140, E155, N170, and N224 each coordinate UDP-N-acetyl-alpha-D-glucosamine. N224 serves as a coordination point for Mg(2+). Positions 227-247 are linker; sequence RQLAQCEGVLQQRLRDHWMDE. The interval 248 to 454 is N-acetyltransferase; that stretch reads GVTFVDPASC…WDRNTQAAQS (207 aa). 2 residues coordinate UDP-N-acetyl-alpha-D-glucosamine: R329 and K347. Catalysis depends on H359, which acts as the Proton acceptor. Residues Y362 and N373 each contribute to the UDP-N-acetyl-alpha-D-glucosamine site. The acetyl-CoA site is built by A376, A419, and R436.

This sequence in the N-terminal section; belongs to the N-acetylglucosamine-1-phosphate uridyltransferase family. In the C-terminal section; belongs to the transferase hexapeptide repeat family. As to quaternary structure, homotrimer. It depends on Mg(2+) as a cofactor.

The protein resides in the cytoplasm. The catalysed reaction is alpha-D-glucosamine 1-phosphate + acetyl-CoA = N-acetyl-alpha-D-glucosamine 1-phosphate + CoA + H(+). It catalyses the reaction N-acetyl-alpha-D-glucosamine 1-phosphate + UTP + H(+) = UDP-N-acetyl-alpha-D-glucosamine + diphosphate. It participates in nucleotide-sugar biosynthesis; UDP-N-acetyl-alpha-D-glucosamine biosynthesis; N-acetyl-alpha-D-glucosamine 1-phosphate from alpha-D-glucosamine 6-phosphate (route II): step 2/2. Its pathway is nucleotide-sugar biosynthesis; UDP-N-acetyl-alpha-D-glucosamine biosynthesis; UDP-N-acetyl-alpha-D-glucosamine from N-acetyl-alpha-D-glucosamine 1-phosphate: step 1/1. It functions in the pathway bacterial outer membrane biogenesis; LPS lipid A biosynthesis. Functionally, catalyzes the last two sequential reactions in the de novo biosynthetic pathway for UDP-N-acetylglucosamine (UDP-GlcNAc). The C-terminal domain catalyzes the transfer of acetyl group from acetyl coenzyme A to glucosamine-1-phosphate (GlcN-1-P) to produce N-acetylglucosamine-1-phosphate (GlcNAc-1-P), which is converted into UDP-GlcNAc by the transfer of uridine 5-monophosphate (from uridine 5-triphosphate), a reaction catalyzed by the N-terminal domain. The polypeptide is Bifunctional protein GlmU (Synechococcus sp. (strain CC9311)).